We begin with the raw amino-acid sequence, 462 residues long: Siroheme synthase (462 aa).

Residues 1-203 form a precorrin-2 dehydrogenase /sirohydrochlorin ferrochelatase region; it reads MQYFPIFVDT…GNNSKAEQMM (203 aa). NAD(+) is bound by residues 22-23 and 43-44; these read EV and PW. A Phosphoserine modification is found at serine 128. The uroporphyrinogen-III C-methyltransferase stretch occupies residues 217–462; sequence GEVYLVGAGP…EKLNWFGADA (246 aa). Proline 226 is an S-adenosyl-L-methionine binding site. The active-site Proton acceptor is the aspartate 249. The active-site Proton donor is the lysine 271. S-adenosyl-L-methionine-binding positions include 302-304, isoleucine 307, 332-333, methionine 384, and alanine 413; these read GGD and TA.

It in the N-terminal section; belongs to the precorrin-2 dehydrogenase / sirohydrochlorin ferrochelatase family. The protein in the C-terminal section; belongs to the precorrin methyltransferase family.

The catalysed reaction is uroporphyrinogen III + 2 S-adenosyl-L-methionine = precorrin-2 + 2 S-adenosyl-L-homocysteine + H(+). The enzyme catalyses precorrin-2 + NAD(+) = sirohydrochlorin + NADH + 2 H(+). It carries out the reaction siroheme + 2 H(+) = sirohydrochlorin + Fe(2+). The protein operates within cofactor biosynthesis; adenosylcobalamin biosynthesis; precorrin-2 from uroporphyrinogen III: step 1/1. It functions in the pathway cofactor biosynthesis; adenosylcobalamin biosynthesis; sirohydrochlorin from precorrin-2: step 1/1. It participates in porphyrin-containing compound metabolism; siroheme biosynthesis; precorrin-2 from uroporphyrinogen III: step 1/1. Its pathway is porphyrin-containing compound metabolism; siroheme biosynthesis; siroheme from sirohydrochlorin: step 1/1. The protein operates within porphyrin-containing compound metabolism; siroheme biosynthesis; sirohydrochlorin from precorrin-2: step 1/1. Its function is as follows. Multifunctional enzyme that catalyzes the SAM-dependent methylations of uroporphyrinogen III at position C-2 and C-7 to form precorrin-2 via precorrin-1. Then it catalyzes the NAD-dependent ring dehydrogenation of precorrin-2 to yield sirohydrochlorin. Finally, it catalyzes the ferrochelation of sirohydrochlorin to yield siroheme. The chain is Siroheme synthase from Pseudoalteromonas atlantica (strain T6c / ATCC BAA-1087).